We begin with the raw amino-acid sequence, 280 residues long: Probable ketoamine kinase lp_1983 (280 aa).

87 to 89 lines the ATP pocket; that stretch reads DWL. Asp-189 serves as the catalytic Proton acceptor.

Belongs to the fructosamine kinase family.

The catalysed reaction is N(6)-(D-ribulosyl)-L-lysine + ATP = N(6)-(3-O-phospho-D-ribulosyl)-L-lysine + ADP + H(+). The enzyme catalyses N-(D-ribulosyl)-cadaverine + ATP = N-(3-O-phospho-D-ribulosyl)-cadaverine + ADP + H(+). It catalyses the reaction N(6)-(D-erythrulosyl)-L-lysine + ATP = N(6)-(3-O-phospho-D-erythrulosyl)-L-lysine + ADP + H(+). It carries out the reaction N-(D-erythrulosyl)-cadaverine + ATP = N-(3-O-phospho-D-erythrulosyl)-cadaverine + ADP + H(+). The catalysed reaction is N(6)-D-ribulosyl-L-lysyl-[protein] + ATP = N(6)-(3-O-phospho-D-ribulosyl)-L-lysyl-[protein] + ADP + H(+). The enzyme catalyses N(6)-(D-erythrulosyl)-L-lysyl-[protein] + ATP = N(6)-(3-O-phospho-D-erythrulosyl)-L-lysyl-[protein] + ADP + H(+). Functionally, ketoamine kinase that phosphorylates ketoamines, such as erythruloselysine, erythrulosecadaverine, ribuloselysine and ribulosecadaverine, on the third carbon of the sugar moiety to generate ketoamine 3-phosphate. Has higher activity on free lysine (erythruloselysine and ribuloselysine), than on ribuloselysine and erythruloselysine residues on glycated proteins. This chain is Probable ketoamine kinase lp_1983, found in Lactiplantibacillus plantarum (strain ATCC BAA-793 / NCIMB 8826 / WCFS1) (Lactobacillus plantarum).